A 254-amino-acid polypeptide reads, in one-letter code: Small ribosomal subunit protein uS2 (254 aa).

Residues 225-254 (ALSERKREKDDAKLKEDEESKKASDKAEIQ) are disordered. The span at 226 to 254 (LSERKREKDDAKLKEDEESKKASDKAEIQ) shows a compositional bias: basic and acidic residues.

This sequence belongs to the universal ribosomal protein uS2 family.

The polypeptide is Small ribosomal subunit protein uS2 (Cytophaga hutchinsonii (strain ATCC 33406 / DSM 1761 / CIP 103989 / NBRC 15051 / NCIMB 9469 / D465)).